Here is an 864-residue protein sequence, read N- to C-terminus: Disintegrin and metalloproteinase domain-containing protein 15 (864 aa).

The first 17 residues, 1–17 (MRLALLWALGLLGAGSP), serve as a signal peptide directing secretion. Residues 18–45 (RPSPPLPNIGGTEEEQQASPERTLSGSM) are disordered. A propeptide spanning residues 18-207 (RPSPPLPNIG…EQHHAHRLKR (190 aa)) is cleaved from the precursor. The segment covering 34–45 (QASPERTLSGSM) has biased composition (polar residues). A Cysteine switch motif is present at residues 177–184 (HTCAPSWH). Cysteine 179 contributes to the Zn(2+) binding site. Topologically, residues 208 to 696 (DVVTETKIVE…TQLKATSSLT (489 aa)) are extracellular. A Peptidase M12B domain is found at 214–415 (KIVELVIVAD…GMGSCLFERQ (202 aa)). N-linked (GlcNAc...) asparagine glycosylation is present at asparagine 238. Intrachain disulfides connect cysteine 324/cysteine 410, cysteine 366/cysteine 394, cysteine 368/cysteine 377, and cysteine 481/cysteine 501. Histidine 349 lines the Zn(2+) pocket. Glutamate 350 is a catalytic residue. Zn(2+)-binding residues include histidine 353 and histidine 359. Asparagine 390 and asparagine 393 each carry an N-linked (GlcNAc...) asparagine glycan. Residues 422-509 (SSLCGNMFVD…QCPSDIRLGD (88 aa)) form the Disintegrin domain. N-linked (GlcNAc...) asparagine glycosylation is found at asparagine 607 and asparagine 612. Cystine bridges form between cysteine 658/cysteine 668, cysteine 662/cysteine 674, and cysteine 676/cysteine 685. Residues 658 to 686 (CRRKCHGHGVCDSSGHCRCEEGWAPPDCM) form the EGF-like domain. A helical membrane pass occupies residues 697–717 (TGLLLSLLLLLVLVLLGASYW). Phosphotyrosine; by HCK and LCK occurs at positions 716 and 736. Residues 718–864 (HRARLHQRLC…PPPAASSLYL (147 aa)) are Cytoplasmic-facing. The tract at residues 736 to 864 (YRAPQSCPPE…PPPAASSLYL (129 aa)) is disordered. A compositionally biased stretch (pro residues) spans 741-750 (SCPPERPGPP). Residues 752 to 762 (RAQQMTGTKQA) show a composition bias toward polar residues. Pro residues-rich tracts occupy residues 768 to 780 (PVPP…PNPV) and 814 to 825 (TKPPPPRKPLPA). Short sequence motifs (SH3-binding) lie at residues 816-822 (PPPPRKP) and 851-857 (RPAPPPP).

As to quaternary structure, interacts specifically with Src family protein-tyrosine kinases (PTKs). Interacts with ITAGV-ITGB3 (vitronectin receptor). Interacts with SH3GL2 and SNX9; this interaction occurs preferentially with ADAM15 precursor, rather than the processed form, suggesting it occurs in a secretory pathway compartment prior to the medial Golgi. Interacts with ITAG9-ITGB1. Interacts with SH3PXD2A. Interacts with ITAGV-ITGB1. Interacts with GRB2, HCK, ITSN1, ITSN2, LYN, MAPK1, MAPK3, NCF1, NCK1, nephrocystin, PTK6, SNX33, LCK and SRC. Zn(2+) is required as a cofactor. Post-translationally, the precursor is cleaved by a furin endopeptidase. An additional membrane proximal site of cleavage affects a small percentage of the proteins and results in disulfide-linked fragments. The prodomain is apparently cleaved in several positions that are N-terminal of the furin cleavage site. In terms of processing, may be partially sialylated. Phosphorylation increases association with PTKs. As to expression, expressed moderately in pericytes of retina. Expressed in testis and in spermatozoa from the caput, corpus, and cauda epididymis, as well as in non-capacitated and acrosome-reacted sperm (at protein level). Highly expressed in heart, brain, lung, and kidney. Expressed at lower levels in spleen, liver, testis and muscle.

Its subcellular location is the endomembrane system. The protein localises to the cell junction. It localises to the adherens junction. The protein resides in the cell projection. It is found in the cilium. Its subcellular location is the flagellum. The protein localises to the cytoplasmic vesicle. It localises to the secretory vesicle. The protein resides in the acrosome. Its function is as follows. Active metalloproteinase with gelatinolytic and collagenolytic activity. Plays a role in the wound healing process. Mediates both heterotypic intraepithelial cell/T-cell interactions and homotypic T-cell aggregation. Inhibits beta-1 integrin-mediated cell adhesion and migration of airway smooth muscle cells. Suppresses cell motility on or towards fibronectin possibly by driving alpha-v/beta-1 integrin (ITAGV-ITGB1) cell surface expression via ERK1/2 inactivation. Cleaves E-cadherin in response to growth factor deprivation. Plays a role in glomerular cell migration. Plays a role in pathological neovascularization. May play a role in cartilage remodeling. May be proteolytically processed, during sperm epididymal maturation and the acrosome reaction. May play a role in sperm-egg binding through its disintegrin domain. Interactions with egg membrane could be mediated via binding between the disintegrin-like domain to one or more integrin receptors on the egg. In Mus musculus (Mouse), this protein is Disintegrin and metalloproteinase domain-containing protein 15 (Adam15).